We begin with the raw amino-acid sequence, 107 residues long: Iron-sulfur cluster assembly protein CyaY (107 aa).

The protein belongs to the frataxin family.

Its function is as follows. Involved in iron-sulfur (Fe-S) cluster assembly. May act as a regulator of Fe-S biogenesis. In Neisseria meningitidis serogroup B (strain ATCC BAA-335 / MC58), this protein is Iron-sulfur cluster assembly protein CyaY.